Consider the following 24-residue polypeptide: Xenoposin-precursor fragment B1 (24 aa).

Expressed by the skin glands.

It is found in the secreted. Functionally, has antibacterial activity. The chain is Xenoposin-precursor fragment B1 from Xenopus borealis (Kenyan clawed frog).